We begin with the raw amino-acid sequence, 588 residues long: Transcription factor tau 60 kDa subunit (588 aa).

The interval 399–588 is sufficient for SPT15-binding; it reads LPKLPENFSM…VYCGTTLEVM (190 aa).

Heterodimer with TFC6. Component of the TFIIIC complex composed of TFC1, TFC3, TFC4, TFC6, TFC7 and TFC8. The subunits are organized in two globular domains, tauA and tauB, connected by a proteolysis-sensitive and flexible linker. Interacts with SPT15 and directly with TFC6.

It localises to the nucleus. Its function is as follows. TFIIIC mediates tRNA and 5S RNA gene activation by binding to intragenic promoter elements. Upstream of the transcription start site, TFIIIC assembles the initiation complex TFIIIB-TFIIIC-tDNA, which is sufficient for RNA polymerase III recruitment and function. Part of the tauB domain of TFIIIC that binds boxB DNA promoter sites of tRNA and similar genes. Plays a role in TFIIB assembly through its interaction with SPT15/TBP. Essential for cell viability. This chain is Transcription factor tau 60 kDa subunit (TFC8), found in Saccharomyces cerevisiae (strain ATCC 204508 / S288c) (Baker's yeast).